Here is a 336-residue protein sequence, read N- to C-terminus: Vacuolar protein sorting-associated protein 26B (336 aa).

A phosphoserine mark is found at Ser302, Ser304, and Ser319.

It belongs to the VPS26 family. Component of the heterotrimeric retromer cargo-selective complex (CSC), also described as vacuolar protein sorting VPS subcomplex (VPS,) formed by VPS26 (VPS26A or VPS26B), VPS29 and VPS35. The CSC has a highly elongated structure with VPS26 and VPS29 binding independently at opposite distal ends of VPS35 as central platform. The CSC is believed to associate with variable sorting nexins to form functionally distinct retromer complex variants. The originally described retromer complex (also called SNX-BAR retromer) is a pentamer containing the CSC and a heterodimeric membrane-deforming subcomplex formed between SNX1 or SNX2 and SNX5 or SNX6 (also called SNX-BAR subcomplex); the respective CSC and SNX-BAR subcomplexes associate with low affinity. The CSC associates with SNX3 to form a SNX3-retromer complex. The CSC associates with SNX27, the WASH complex and the SNX-BAR subcomplex to form the SNX27-retromer complex. Interacts with VPS29, VPS35, TBC1D5, GOLPH3, SNX27.

The protein resides in the cytoplasm. Its subcellular location is the membrane. It localises to the early endosome. The protein localises to the late endosome. Acts as a component of the retromer cargo-selective complex (CSC). The CSC is believed to be the core functional component of retromer or respective retromer complex variants acting to prevent missorting of selected transmembrane cargo proteins into the lysosomal degradation pathway. The recruitment of the CSC to the endosomal membrane involves RAB7A and SNX3. The SNX-BAR retromer mediates retrograde transport of cargo proteins from endosomes to the trans-Golgi network (TGN) and is involved in endosome-to-plasma membrane transport for cargo protein recycling. The SNX3-retromer mediates the retrograde transport of WLS distinct from the SNX-BAR retromer pathway. The SNX27-retromer is believed to be involved in endosome-to-plasma membrane trafficking and recycling of a broad spectrum of cargo proteins. The CSC seems to act as recruitment hub for other proteins, such as the WASH complex and TBC1D5. May be involved in retrograde transport of SORT1 but not of IGF2R. Acts redundantly with VSP26A in SNX-27 mediated endocytic recycling of SLC2A1/GLUT1. In Homo sapiens (Human), this protein is Vacuolar protein sorting-associated protein 26B (VPS26B).